Consider the following 269-residue polypeptide: MKI67 FHA domain-interacting nucleolar phosphoprotein (269 aa).

Residues 45 to 123 form the RRM domain; sequence GVLYVGHLPR…RIIKCHVIPP (79 aa). Residues 234-269 are disordered; sequence DEIVIKVKPLPENSDDVEESEEESAEEDEGEEEEAA. Residues 246-269 show a composition bias toward acidic residues; it reads NSDDVEESEEESAEEDEGEEEEAA.

The protein resides in the nucleus. The protein localises to the nucleolus. In terms of biological role, plays an essential role in early embryonic development. The protein is MKI67 FHA domain-interacting nucleolar phosphoprotein (nifk) of Danio rerio (Zebrafish).